Consider the following 181-residue polypeptide: Probable RNA 2'-phosphotransferase (181 aa).

The protein belongs to the KptA/TPT1 family.

Its function is as follows. Removes the 2'-phosphate from RNA via an intermediate in which the phosphate is ADP-ribosylated by NAD followed by a presumed transesterification to release the RNA and generate ADP-ribose 1''-2''-cyclic phosphate (APPR&gt;P). May function as an ADP-ribosylase. This is Probable RNA 2'-phosphotransferase from Acaryochloris marina (strain MBIC 11017).